The sequence spans 414 residues: Methyltransferase-like protein 2 (414 aa).

Residues leucine 56–phenylalanine 77 form a disordered region.

It belongs to the MT-A70-like family.

In terms of biological role, probable methyltransferase. This is Methyltransferase-like protein 2 from Arabidopsis thaliana (Mouse-ear cress).